Here is a 467-residue protein sequence, read N- to C-terminus: MTLRLFDTESRTMREFAPLVPGRASVYLCGATVQGEPHIGHVRSGVAFDVLRRWLQAHDYDVWFIRNVTDIDDKILNKAAEAGRPWWEWAATYERAFDRAYRLLGVQPPSAEPRATGHITQMVELMRRLIERGHAYASAGNVYFDVQSYPEYGALSGHKLDDVHQGESAGEGKRDPRDFTLWKAAKPGEPSWPSPWGPGRPGWHLECSAMAEFYLGAEFDIHCGGMDLVFPHHENEIAQSKAAGDGFARYWLHNGWVTMGGEKMSKSLGNVLSVPNMLTKVRAVELRFYLGSAHYRSMLEYSDKALDDAVAGYQRIEAFLHRTAERVGEIPVGKWTDAFAEAMDDDLAVPRALAEVFRLVTEGNKALEAGAVDTARELGGQVRAMLGILGVCPFDPQWDHKQDDSVAQTALDVLVRAELDRRQQARADKDWATADAVRDRLHAAGIDVTDTPNGPEWSLRTARGKAN.

Cys29 provides a ligand contact to Zn(2+). The short motif at 31–41 (ATVQGEPHIGH) is the 'HIGH' region element. Residues Cys207, His232, and Glu236 each contribute to the Zn(2+) site. The 'KMSKS' region motif lies at 263–267 (KMSKS). Lys266 contributes to the ATP binding site. A disordered region spans residues 446-467 (IDVTDTPNGPEWSLRTARGKAN).

Belongs to the class-I aminoacyl-tRNA synthetase family. As to quaternary structure, monomer. Zn(2+) serves as cofactor.

It localises to the cytoplasm. The catalysed reaction is tRNA(Cys) + L-cysteine + ATP = L-cysteinyl-tRNA(Cys) + AMP + diphosphate. This Nocardia farcinica (strain IFM 10152) protein is Cysteine--tRNA ligase.